A 304-amino-acid polypeptide reads, in one-letter code: tRNA uridine(34) hydroxylase (304 aa).

A Rhodanese domain is found at 124-219 (QDEETLLIDT…YLETIPKEDS (96 aa)). Catalysis depends on C179, which acts as the Cysteine persulfide intermediate.

Belongs to the TrhO family.

It catalyses the reaction uridine(34) in tRNA + AH2 + O2 = 5-hydroxyuridine(34) in tRNA + A + H2O. Catalyzes oxygen-dependent 5-hydroxyuridine (ho5U) modification at position 34 in tRNAs. In Bartonella henselae (strain ATCC 49882 / DSM 28221 / CCUG 30454 / Houston 1) (Rochalimaea henselae), this protein is tRNA uridine(34) hydroxylase.